A 345-amino-acid chain; its full sequence is L-threonine 3-dehydrogenase (345 aa).

C39 is a Zn(2+) binding site. Catalysis depends on charge relay system residues T41 and H44. Residues H64, E65, C94, C97, C100, and C108 each coordinate Zn(2+). Residues I176, D196, R201, 263 to 265 (LGI), and 287 to 288 (VY) contribute to the NAD(+) site.

The protein belongs to the zinc-containing alcohol dehydrogenase family. In terms of assembly, homotetramer. Zn(2+) is required as a cofactor.

It is found in the cytoplasm. It catalyses the reaction L-threonine + NAD(+) = (2S)-2-amino-3-oxobutanoate + NADH + H(+). It participates in amino-acid degradation; L-threonine degradation via oxydo-reductase pathway; glycine from L-threonine: step 1/2. Functionally, catalyzes the NAD(+)-dependent oxidation of L-threonine to 2-amino-3-ketobutyrate. This Anaeromyxobacter dehalogenans (strain 2CP-C) protein is L-threonine 3-dehydrogenase.